Reading from the N-terminus, the 123-residue chain is Holo-[acyl-carrier-protein] synthase (123 aa).

Mg(2+) is bound by residues Asp-8 and Glu-55.

The protein belongs to the P-Pant transferase superfamily. AcpS family. The cofactor is Mg(2+).

The protein localises to the cytoplasm. It catalyses the reaction apo-[ACP] + CoA = holo-[ACP] + adenosine 3',5'-bisphosphate + H(+). Functionally, transfers the 4'-phosphopantetheine moiety from coenzyme A to a Ser of acyl-carrier-protein. The polypeptide is Holo-[acyl-carrier-protein] synthase (Caldicellulosiruptor saccharolyticus (strain ATCC 43494 / DSM 8903 / Tp8T 6331)).